The following is a 511-amino-acid chain: DELLA protein RGL1 (511 aa).

Basic and acidic residues predominate over residues 1-11 (MKREHNHRESS). The disordered stretch occupies residues 1 to 20 (MKREHNHRESSAGEGGSSSM). The DELLA motif signature appears at 32-36 (DELLV). The LEXLE motif signature appears at 54–58 (LEQLE). The VHYNP motif motif lies at 73-77 (VHYNP). The region spanning 143-506 (LDSQETGVRL…RPLIATSAWR (364 aa)) is the GRAS domain. Residues 150–204 (VRLVHALLACAEAVQQNNLKLADALVKHVGLLASSQAGAMRKVATYFAEGLARRI) are leucine repeat I (LRI). Positions 157-161 (LACAE) match the LxCxE motif motif. Positions 223–288 (QIHFYESCPY…NGPPDFRLTG (66 aa)) are VHIID. The VHIID motif lies at 254-258 (VHVID). A leucine repeat II (LRII) region spans residues 298 to 330 (EVGWKLGQLASTIGVNFEFKSIALNNLSDLKPE). Positions 341–427 (VAVNSVFELH…ELFLGRQILN (87 aa)) are PFYRE. An LXXLL motif motif is present at residues 349 to 353 (LHRLL). Residues 430 to 506 (ACEGEDRVER…RPLIATSAWR (77 aa)) are SAW.

The protein belongs to the GRAS family. DELLA subfamily. As to quaternary structure, interacts directly with the GID2/SLY1 component of the SCF(GID2) complex. Interacts (via N-terminus) with GID1A, GID1B and GID1B (via N-terminus). Interacts with the BOI proteins BOI, BRG1, BRG2 and BRG3. Binds to and coactivates GAF1/IDD2 and ENY/IDD1. Phosphorylated. In terms of processing, may be ubiquitinated, as suggested by its interaction with GID2. Ubiquitination is however unsure since in contrast to other DELLA proteins, it is not ubiquitinated and degraded upon GA application. Nevertheless, ubiquitination may be triggered by other processes. In terms of tissue distribution, predominantly expressed in germinating seeds and flowers and siliques. Highly expressed in inflorescences and weakly or not expressed in rosette leaves, etiolated seedlings, siliques, mature stems and roots. RGA and GAI transcripts were detected at slightly varying levels in all tissues examined. RGL2 signal was undetected, and RGL3 signal was very weak in all tissues examined (rosette leaves, seedlings, inflorescences, and siliques) except inflorescences. In the flower, it is expressed in developing ovules as well as in developing anthers throughout microspore development.

It localises to the nucleus. Its function is as follows. Probable transcriptional regulator that acts as a repressor of the gibberellin (GA) signaling pathway. No effect of the BOI proteins on its stability. Probably acts by participating in large multiprotein complexes that repress transcription of GA-inducible genes. Has overlapping but distinct roles in GA signaling compared to RGA and GAI. Regulates the floral development. May also participate in seed germination and in ovule and anther development. Its activity is probably regulated by other phytohormones such as auxin and ethylene. In Arabidopsis thaliana (Mouse-ear cress), this protein is DELLA protein RGL1 (RGL1).